Here is a 370-residue protein sequence, read N- to C-terminus: MDSSNYFHDCKTMLSEHNESIESSNNDINGKQKEHIKKGNSENQDVDPDTNPDAVPDDDDDDDDNSNDESEYESSQMDSEKNKGSIKNSKNVVIYADGVYDMLHLGHMKQLEQAKKLFENTTLIVGVTSDNETKLFKGQVVQTLEERTETLKHIRWVDEIISPCPWVVTPEFLEKYKIDYVAHDDIPYANNQKKKKKKKSKGKSFSFDEENEDIYAWLKRAGKFKATQRTEGVSTTDLIVRILKNYEDYIERSLQRGIHPNELNIGVTKAQSIKMKKNLIRWGEKVTDELTKVTLTDKPLGTDFDQGVENLQVKFKELFKIWKNASNKLITDFTRKLEATSYLTSIQNIIDYEIENDDYASSNFDDETSS.

Residues 17–85 (HNESIESSNN…QMDSEKNKGS (69 aa)) are disordered. Over residues 30-40 (GKQKEHIKKGN) the composition is skewed to basic and acidic residues. A compositionally biased stretch (acidic residues) spans 44-72 (QDVDPDTNPDAVPDDDDDDDDNSNDESEY). CTP contacts are provided by residues 99-107 (VYDMLHLGH) and Lys-137. Lys-137 and Trp-166 together coordinate substrate. CTP contacts are provided by residues 183–184 (HD), Tyr-188, and 229–233 (RTEGV).

This sequence belongs to the cytidylyltransferase family.

The catalysed reaction is phosphocholine + CTP + H(+) = CDP-choline + diphosphate. The protein operates within phospholipid metabolism; phosphatidylcholine biosynthesis; phosphatidylcholine from phosphocholine: step 1/2. Its function is as follows. Controls phosphatidylcholine synthesis. This is Choline-phosphate cytidylyltransferase (CTP) from Plasmodium falciparum (isolate K1 / Thailand).